The chain runs to 637 residues: 1-deoxy-D-xylulose-5-phosphate synthase (637 aa).

Thiamine diphosphate is bound by residues His71 and 112–114; that span reads SHA. Asp144 provides a ligand contact to Mg(2+). Residues 145-146, Asn173, Tyr284, and Glu365 contribute to the thiamine diphosphate site; that span reads GA. Asn173 lines the Mg(2+) pocket.

It belongs to the transketolase family. DXPS subfamily. As to quaternary structure, homodimer. Mg(2+) serves as cofactor. It depends on thiamine diphosphate as a cofactor.

It catalyses the reaction D-glyceraldehyde 3-phosphate + pyruvate + H(+) = 1-deoxy-D-xylulose 5-phosphate + CO2. The protein operates within metabolic intermediate biosynthesis; 1-deoxy-D-xylulose 5-phosphate biosynthesis; 1-deoxy-D-xylulose 5-phosphate from D-glyceraldehyde 3-phosphate and pyruvate: step 1/1. In terms of biological role, catalyzes the acyloin condensation reaction between C atoms 2 and 3 of pyruvate and glyceraldehyde 3-phosphate to yield 1-deoxy-D-xylulose-5-phosphate (DXP). The polypeptide is 1-deoxy-D-xylulose-5-phosphate synthase (Mycobacterium ulcerans (strain Agy99)).